The primary structure comprises 831 residues: uncharacterized protein (831 aa).

A disordered region spans residues 285 to 311 (ALNLKRQQLKEEQKEQQSTGDRSDVST). Position 470 to 477 (470 to 477 (GDTGNGKS)) interacts with ATP.

This is an uncharacterized protein from Bacillus subtilis (strain 168).